Reading from the N-terminus, the 444-residue chain is Structure-specific endonuclease subunit SLX1 (444 aa).

The region spanning 23–105 (AFYCCYLLRS…QNTKVSRHAD (83 aa)) is the GIY-YIG domain. An SLX1-type zinc finger spans residues 240–295 (CGVCKQRLILQHDIIAVCSHSSCHCAAHLSCLSSHFLKDKDSDSELIPREGTCPAC). 2 disordered regions span residues 323–355 (RRRR…DALQ) and 386–444 (AHRP…EVIE).

It belongs to the SLX1 family. As to quaternary structure, forms a heterodimer with SLX4. Requires a divalent metal cation as cofactor.

It localises to the nucleus. Catalytic subunit of the SLX1-SLX4 structure-specific endonuclease that resolves DNA secondary structures generated during DNA repair and recombination. Has endonuclease activity towards branched DNA substrates, introducing single-strand cuts in duplex DNA close to junctions with ss-DNA. The chain is Structure-specific endonuclease subunit SLX1 from Paracoccidioides brasiliensis (strain Pb18).